Here is a 243-residue protein sequence, read N- to C-terminus: 23S rRNA (guanosine-2'-O-)-methyltransferase RlmB (243 aa).

The S-adenosyl-L-methionine site is built by Gly-196, Ile-216, and Leu-225.

This sequence belongs to the class IV-like SAM-binding methyltransferase superfamily. RNA methyltransferase TrmH family. RlmB subfamily. In terms of assembly, homodimer.

The protein resides in the cytoplasm. The catalysed reaction is guanosine(2251) in 23S rRNA + S-adenosyl-L-methionine = 2'-O-methylguanosine(2251) in 23S rRNA + S-adenosyl-L-homocysteine + H(+). Specifically methylates the ribose of guanosine 2251 in 23S rRNA. This Salmonella typhi protein is 23S rRNA (guanosine-2'-O-)-methyltransferase RlmB.